We begin with the raw amino-acid sequence, 643 residues long: Beta-1,3-galactosyltransferase GALT1 (643 aa).

Topologically, residues 1-6 (MKRFYG) are cytoplasmic. Residues 7–23 (GLLVVSMCMFLTVYRYV) form a helical; Signal-anchor for type II membrane protein membrane-spanning segment. At 24–643 (DLNTPVEKPY…TKRSLCCREW (620 aa)) the chain is on the lumenal side. Residues asparagine 45, asparagine 87, asparagine 144, asparagine 162, asparagine 277, asparagine 287, and asparagine 508 are each glycosylated (N-linked (GlcNAc...) asparagine). The region spanning 171–364 (LKLQIPCGLT…DFRLISILAS (194 aa)) is the Galectin domain.

It belongs to the glycosyltransferase 31 family. Interacts with GMII. Mn(2+) is required as a cofactor. In terms of tissue distribution, expressed in stems and siliques.

It is found in the golgi apparatus membrane. The protein operates within protein modification; protein glycosylation. In terms of biological role, beta-1,3-galactosyltransferase that transfers galactose from UDP-galactose to substrates with a terminal beta-N-acetylglucosamine (beta-GlcNAc) residue. Involved in the biosynthesis of N-glycans containing Lewis a structures (with the combination of FUT13). In Arabidopsis thaliana (Mouse-ear cress), this protein is Beta-1,3-galactosyltransferase GALT1.